A 442-amino-acid polypeptide reads, in one-letter code: Histidinol dehydrogenase (442 aa).

NAD(+) is bound by residues tyrosine 138, glutamine 199, and asparagine 222. Substrate is bound by residues serine 245, glutamine 267, and histidine 270. Zn(2+) contacts are provided by glutamine 267 and histidine 270. Active-site proton acceptor residues include glutamate 335 and histidine 336. Substrate-binding residues include histidine 336, aspartate 369, glutamate 423, and histidine 428. Aspartate 369 serves as a coordination point for Zn(2+). Residue histidine 428 participates in Zn(2+) binding.

Belongs to the histidinol dehydrogenase family. It depends on Zn(2+) as a cofactor.

The enzyme catalyses L-histidinol + 2 NAD(+) + H2O = L-histidine + 2 NADH + 3 H(+). It participates in amino-acid biosynthesis; L-histidine biosynthesis; L-histidine from 5-phospho-alpha-D-ribose 1-diphosphate: step 9/9. Its function is as follows. Catalyzes the sequential NAD-dependent oxidations of L-histidinol to L-histidinaldehyde and then to L-histidine. In Ralstonia nicotianae (strain ATCC BAA-1114 / GMI1000) (Ralstonia solanacearum), this protein is Histidinol dehydrogenase.